Here is a 534-residue protein sequence, read N- to C-terminus: MQRISINVSGIRRFCITSLSSSSASNLTDHGMLKQVLESCKAPSNSKCVLQAHAQIFKLGYGTYPSLLVSTVAAYRRCNRSYLARRLLLWFLSLSPGVCNINLIIESLMKIGESGLAKKVLRNASDQNVITWNLMIGGYVRNVQYEEALKALKNMLSFTDIKPNKFSFASSLAACARLGDLHHAKWVHSLMIDSGIELNAILSSALVDVYAKCGDIGTSREVFYSVKRNDVSIWNAMITGFATHGLATEAIRVFSEMEAEHVSPDSITFLGLLTTCSHCGLLEEGKEYFGLMSRRFSIQPKLEHYGAMVDLLGRAGRVKEAYELIESMPIEPDVVIWRSLLSSSRTYKNPELGEIAIQNLSKAKSGDYVLLSNIYSSTKKWESAQKVRELMSKEGIRKAKGKSWLEFGGMIHRFKAGDTSHIETKAIYKVLEGLIQKTKSQGFVSDTDLVLMDVSEEEKEENLNYHSEKLALAYVILKSSPGTEIRIQKNIRMCSDCHNWIKAVSKLLNRVIIMRDRIRFHRFEDGLCSCRDYW.

PPR repeat units follow at residues 128-158 (NVIT…MLSF), 164-198 (NKFS…GIEL), 199-229 (NAIL…VKRN), 230-264 (DVSI…HVSP), 265-295 (DSIT…MSRR), and 301-331 (KLEH…MPIE). The interval 336–408 (IWRSLLSSSR…AKGKSWLEFG (73 aa)) is type E motif. A type E(+) motif region spans residues 409–439 (GMIHRFKAGDTSHIETKAIYKVLEGLIQKTK). The tract at residues 440–534 (SQGFVSDTDL…DGLCSCRDYW (95 aa)) is type DYW motif.

This sequence belongs to the PPR family. PCMP-H subfamily.

The protein is Pentatricopeptide repeat-containing protein At5g50990 (PCMP-H59) of Arabidopsis thaliana (Mouse-ear cress).